We begin with the raw amino-acid sequence, 484 residues long: MKFIVKLYPEIMMKSKPVRMRFTKMLETNIRNVLKKVDDDAKVQRQWDRIMVMVPKNKPELAQAFGERLACIPGIAHVVQVDEYSFTSVDDIYQQVLPVYRDQIAGKTFCVRVKRTGSHDFNSIEVERYVGGGLNQFTDAIGVRLKNPEVTVNLEIEGDKLYMVTKRIEGLGGFPMATQEDVLSLISGGFDSGVSSYQFIKKGARTHYCFFNLGGAQHEIGVKQVAYHLWKTFGESHKVKFVSVPFEPVVAEILEKIDNGQMGVVLKRMMMRTAARIAERMGIQAIVTGESLGQVSSQTLTNLNVIDRCTDMLILRPLITMDKQDIINECRRIGTEDFAKSMPEYCGVISQKPTVKAVLAKVEAEETKFSEDLIDRIVEQAVAIDIREIAEQMNTRITETETVVAIDTNEVVIDIRAPEEEENKPLEIEGVEIKRIPFFKLATQFADLDKQKTYLLYCERGVMSKLQALYLIEQGYHNVKVYRP.

Positions 63-167 constitute a THUMP domain; it reads QAFGERLACI…GDKLYMVTKR (105 aa). ATP contacts are provided by residues 185–186, lysine 267, glycine 289, and glutamine 298; that span reads LI. A disulfide bond links cysteine 346 and cysteine 458. In terms of domain architecture, Rhodanese spans 406–484; it reads IDTNEVVIDI…GYHNVKVYRP (79 aa). The active-site Cysteine persulfide intermediate is cysteine 458.

Belongs to the ThiI family.

The protein resides in the cytoplasm. The enzyme catalyses [ThiI sulfur-carrier protein]-S-sulfanyl-L-cysteine + a uridine in tRNA + 2 reduced [2Fe-2S]-[ferredoxin] + ATP + H(+) = [ThiI sulfur-carrier protein]-L-cysteine + a 4-thiouridine in tRNA + 2 oxidized [2Fe-2S]-[ferredoxin] + AMP + diphosphate. It catalyses the reaction [ThiS sulfur-carrier protein]-C-terminal Gly-Gly-AMP + S-sulfanyl-L-cysteinyl-[cysteine desulfurase] + AH2 = [ThiS sulfur-carrier protein]-C-terminal-Gly-aminoethanethioate + L-cysteinyl-[cysteine desulfurase] + A + AMP + 2 H(+). The protein operates within cofactor biosynthesis; thiamine diphosphate biosynthesis. Functionally, catalyzes the ATP-dependent transfer of a sulfur to tRNA to produce 4-thiouridine in position 8 of tRNAs, which functions as a near-UV photosensor. Also catalyzes the transfer of sulfur to the sulfur carrier protein ThiS, forming ThiS-thiocarboxylate. This is a step in the synthesis of thiazole, in the thiamine biosynthesis pathway. The sulfur is donated as persulfide by IscS. This is tRNA sulfurtransferase from Shewanella oneidensis (strain ATCC 700550 / JCM 31522 / CIP 106686 / LMG 19005 / NCIMB 14063 / MR-1).